The primary structure comprises 157 residues: Ribosome maturation factor RimP (157 aa).

Belongs to the RimP family.

It localises to the cytoplasm. Its function is as follows. Required for maturation of 30S ribosomal subunits. The chain is Ribosome maturation factor RimP from Synechococcus sp. (strain CC9311).